The sequence spans 87 residues: Diazepam-binding inhibitor-like 5 (87 aa).

Positions 2 to 87 (SQVEFEMACA…VEELKKNETC (86 aa)) constitute an ACB domain. Residues 29–33 (YSFYK), Lys-55, and Tyr-74 each bind an acyl-CoA.

This sequence belongs to the ACBP family. Testis.

The protein resides in the cytoplasm. Functionally, may be involved in the energy metabolism of the mature sperm. The chain is Diazepam-binding inhibitor-like 5 (Dbil5) from Rattus norvegicus (Rat).